Reading from the N-terminus, the 183-residue chain is NAD(P)H-quinone oxidoreductase subunit I, chloroplastic (183 aa).

4Fe-4S ferredoxin-type domains are found at residues 55–84 (GRIHFEFDKCIACEVCVRVCPINLPVVDWE) and 95–124 (KNYSIDFGVCIFCGNCVEYCPTNCLSMTEE). Residues Cys64, Cys67, Cys70, Cys74, Cys104, Cys107, Cys110, and Cys114 each contribute to the [4Fe-4S] cluster site.

This sequence belongs to the complex I 23 kDa subunit family. NDH is composed of at least 16 different subunits, 5 of which are encoded in the nucleus. The cofactor is [4Fe-4S] cluster.

It localises to the plastid. Its subcellular location is the chloroplast thylakoid membrane. The catalysed reaction is a plastoquinone + NADH + (n+1) H(+)(in) = a plastoquinol + NAD(+) + n H(+)(out). The enzyme catalyses a plastoquinone + NADPH + (n+1) H(+)(in) = a plastoquinol + NADP(+) + n H(+)(out). Functionally, NDH shuttles electrons from NAD(P)H:plastoquinone, via FMN and iron-sulfur (Fe-S) centers, to quinones in the photosynthetic chain and possibly in a chloroplast respiratory chain. The immediate electron acceptor for the enzyme in this species is believed to be plastoquinone. Couples the redox reaction to proton translocation, and thus conserves the redox energy in a proton gradient. The sequence is that of NAD(P)H-quinone oxidoreductase subunit I, chloroplastic from Marchantia polymorpha (Common liverwort).